A 179-amino-acid polypeptide reads, in one-letter code: Pyridoxal 5'-phosphate synthase subunit PdxT (179 aa).

48–50 (GES) contributes to the L-glutamine binding site. Residue Cys79 is the Nucleophile of the active site. Residues Arg101 and 127–128 (IR) contribute to the L-glutamine site. Catalysis depends on charge relay system residues His163 and Glu165.

Belongs to the glutaminase PdxT/SNO family. In the presence of PdxS, forms a dodecamer of heterodimers. Only shows activity in the heterodimer.

The catalysed reaction is aldehydo-D-ribose 5-phosphate + D-glyceraldehyde 3-phosphate + L-glutamine = pyridoxal 5'-phosphate + L-glutamate + phosphate + 3 H2O + H(+). It carries out the reaction L-glutamine + H2O = L-glutamate + NH4(+). Its pathway is cofactor biosynthesis; pyridoxal 5'-phosphate biosynthesis. Functionally, catalyzes the hydrolysis of glutamine to glutamate and ammonia as part of the biosynthesis of pyridoxal 5'-phosphate. The resulting ammonia molecule is channeled to the active site of PdxS. In Francisella tularensis subsp. holarctica (strain FTNF002-00 / FTA), this protein is Pyridoxal 5'-phosphate synthase subunit PdxT.